A 769-amino-acid chain; its full sequence is Transferrin receptor protein 1 (769 aa).

Residues 1–70 (MMDQARSAFS…KPKRFNGFIC (70 aa)) lie on the Cytoplasmic side of the membrane. Residues 1-70 (MMDQARSAFS…KPKRFNGFIC (70 aa)) form a mediates interaction with SH3BP4 region. A phosphoserine mark is found at S10 and S19. Phosphotyrosine is present on Y20. The short motif at 20 to 23 (YTRF) is the Endocytosis signal element. T21 bears the Phosphothreonine mark. At S24 the chain carries Phosphoserine. The Stop-transfer sequence motif lies at 61 to 64 (KPKR). C70 carries S-palmitoyl cysteine lipidation. The chain crosses the membrane as a helical; Signal-anchor for type II membrane protein span at residues 71–91 (YGTIAIILFFLIGFMIGYLGY). At 92-769 (CKRVEAKSEC…GDIWDIDNEF (678 aa)) the chain is on the extracellular side. Residue T107 is glycosylated (O-linked (GalNAc...) threonine). The PA domain maps to 232–322 (SKAATVTGRL…GTGDPYTPGF (91 aa)). Residues N260 and N326 are each glycosylated (N-linked (GlcNAc...) asparagine). The interval 578–769 (TMDVYEKLIQ…GDIWDIDNEF (192 aa)) is ligand-binding. Positions 655-657 (RGD) match the Cell attachment site motif. N731 and N736 each carry an N-linked (GlcNAc...) asparagine glycan.

The protein belongs to the peptidase M28 family. M28B subfamily. In terms of assembly, homodimer; disulfide-linked. Binds one transferrin molecule per subunit. Interacts with SH3BP4. Homodimer; disulfide-linked. Binds one transferrin or HFE molecule per subunit. Binds the HLA class II histocompatibility antigen, DR1. Interacts with SH3BP3. Interacts with STEAP3; facilitates TFRC endocytosis in erythroid precursor cells. Post-translationally, stearoylated by ZDHHC6 which inhibits TFRC-mediated activation of the JNK pathway and promotes mitochondrial fragmentation. Stearoylation does not affect iron uptake. In terms of processing, N- and O-glycosylated, phosphorylated and palmitoylated.

It is found in the cell membrane. Its subcellular location is the melanosome. Its function is as follows. Cellular uptake of iron occurs via receptor-mediated endocytosis of ligand-occupied transferrin receptor into specialized endosomes. Endosomal acidification leads to iron release. The apotransferrin-receptor complex is then recycled to the cell surface with a return to neutral pH and the concomitant loss of affinity of apotransferrin for its receptor. Transferrin receptor is necessary for development of erythrocytes and the nervous system. Positively regulates T and B cell proliferation through iron uptake. Acts as a lipid sensor that regulates mitochondrial fusion by regulating activation of the JNK pathway. When dietary levels of stearate (C18:0) are low, promotes activation of the JNK pathway, resulting in HUWE1-mediated ubiquitination and subsequent degradation of the mitofusin MFN2 and inhibition of mitochondrial fusion. When dietary levels of stearate (C18:0) are high, TFRC stearoylation inhibits activation of the JNK pathway and thus degradation of the mitofusin MFN2. Mediates uptake of NICOL1 into fibroblasts where it may regulate extracellular matrix production. This chain is Transferrin receptor protein 1 (TFRC), found in Felis catus (Cat).